The following is a 636-amino-acid chain: MAAEEEAAAGGKVLREENQCIAPVVSSRVSPGTRPTAMGSFSSHMTEFPRKRKGSDSDPSQSGIMTEKVVEKLSQNPLTYLLSTRIEISASSGSRVEDGEHQVKMKAFREAHSQTEKRRRDKMNNLIEELSAMIPQCNPMARKLDKLTVLRMAVQHLRSLKGLTNSYVGSNYRPSFLQDNELRHLILKTAEGFLFVVGCERGKILFVSKSVSKILNYDQASLTGQSLFDFLHPKDVAKVKEQLSSFDISPREKLIDAKTGLQVHSNLHAGRTRVYSGSRRSFFCRIKSCKISVKEEHGCLPNSKKKEHRKFYTIHCTGYLRSWPPNIVGMEEERNSKKDNSNFTCLVAIGRLQPYIVPQNSGEINVKPTEFITRFAVNGKFVYVDQRATAILGYLPQELLGTSCYEYFHQDDHNNLTDKHKAVLQSKEKILTDSYKFRAKDGSFVTLKSQWFSFTNPWTKELEYIVSVNTLVLGHSEPGEASFLPCSSQSSEESSRQSCMSVPGMSTGTVLGAGSIGTDIANEILDLQRLQSSSYLDDSSPTGLMKDTHTVNCRSMSNKELFPPSPSEMGELEATRQNQSTVAVHSHEPLLSDGAQLDFDALCDNDDTAMAAFMNYLEAEGGLGDPGDFSDIQWTL.

A disordered region spans residues 25–62; the sequence is VSSRVSPGTRPTAMGSFSSHMTEFPRKRKGSDSDPSQS. Residues 46 to 258 are interaction with PER2; the sequence is TEFPRKRKGS…SPREKLIDAK (213 aa). Residues 49–54 carry the Nuclear localization signal motif; the sequence is PRKRKG. Residues 107–160 form the bHLH domain; that stretch reads AFREAHSQTEKRRRDKMNNLIEELSAMIPQCNPMARKLDKLTVLRMAVQHLRSL. Positions 177–187 match the Nuclear export signal 1 motif; it reads LQDNELRHLIL. Residues 178 to 250 form the PAS 1 domain; the sequence is QDNELRHLIL…EQLSSFDISP (73 aa). A Glycyl lysine isopeptide (Lys-Gly) (interchain with G-Cter in SUMO2 and SUMO3) cross-link involves residue Lys-287. A Glycyl lysine isopeptide (Lys-Gly) (interchain with G-Cter in SUMO2) cross-link involves residue Lys-294. Positions 357-427 constitute a PAS 2 domain; sequence VPQNSGEINV…DKHKAVLQSK (71 aa). A Nuclear export signal 2 motif is present at residues 392 to 400; sequence LGYLPQELL. The 44-residue stretch at 432–475 folds into the PAC domain; the sequence is TDSYKFRAKDGSFVTLKSQWFSFTNPWTKELEYIVSVNTLVLGH.

In terms of assembly, component of the circadian core oscillator, which includes the CRY proteins, CLOCK, or NPAS2, BMAL1 or BMAL2, CSNK1D and/or CSNK1E, TIMELESS and the PER proteins. Interacts directly with CLOCK to form the BMAL2-CLOCK transactivator. Can form heterodimers or homodimers which interact directly with CLOCK to form the transcription activator. Interacts with NPAS2 and HIF1A. Interacts with PER2. As to expression, expressed in fetal brain. Highly expressed in brain and placenta. Lower levels in heart, liver, thymus, kidney and lung. Located to endothelial cells and neuronal cells of the suprachiasmatic nucleus (SCN). Also detected in endothelial cells of the heart, lung and kidney. In the brain, specifically expressed in the thalamus, hippocampus and amygdala.

Its subcellular location is the nucleus. Its function is as follows. Transcriptional activator which forms a core component of the circadian clock. The circadian clock, an internal time-keeping system, regulates various physiological processes through the generation of approximately 24 hour circadian rhythms in gene expression, which are translated into rhythms in metabolism and behavior. It is derived from the Latin roots 'circa' (about) and 'diem' (day) and acts as an important regulator of a wide array of physiological functions including metabolism, sleep, body temperature, blood pressure, endocrine, immune, cardiovascular, and renal function. Consists of two major components: the central clock, residing in the suprachiasmatic nucleus (SCN) of the brain, and the peripheral clocks that are present in nearly every tissue and organ system. Both the central and peripheral clocks can be reset by environmental cues, also known as Zeitgebers (German for 'timegivers'). The predominant Zeitgeber for the central clock is light, which is sensed by retina and signals directly to the SCN. The central clock entrains the peripheral clocks through neuronal and hormonal signals, body temperature and feeding-related cues, aligning all clocks with the external light/dark cycle. Circadian rhythms allow an organism to achieve temporal homeostasis with its environment at the molecular level by regulating gene expression to create a peak of protein expression once every 24 hours to control when a particular physiological process is most active with respect to the solar day. Transcription and translation of core clock components (CLOCK, NPAS2, BMAL1, BMAL2, PER1, PER2, PER3, CRY1 and CRY2) plays a critical role in rhythm generation, whereas delays imposed by post-translational modifications (PTMs) are important for determining the period (tau) of the rhythms (tau refers to the period of a rhythm and is the length, in time, of one complete cycle). A diurnal rhythm is synchronized with the day/night cycle, while the ultradian and infradian rhythms have a period shorter and longer than 24 hours, respectively. Disruptions in the circadian rhythms contribute to the pathology of cardiovascular diseases, cancer, metabolic syndromes and aging. A transcription/translation feedback loop (TTFL) forms the core of the molecular circadian clock mechanism. Transcription factors, CLOCK or NPAS2 and BMAL1 or BMAL2, form the positive limb of the feedback loop, act in the form of a heterodimer and activate the transcription of core clock genes and clock-controlled genes (involved in key metabolic processes), harboring E-box elements (5'-CACGTG-3') within their promoters. The core clock genes: PER1/2/3 and CRY1/2 which are transcriptional repressors form the negative limb of the feedback loop and interact with the CLOCK|NPAS2-BMAL1|BMAL2 heterodimer inhibiting its activity and thereby negatively regulating their own expression. This heterodimer also activates nuclear receptors NR1D1/2 and RORA/B/G, which form a second feedback loop and which activate and repress BMAL1 transcription, respectively. The CLOCK-BMAL2 heterodimer activates the transcription of SERPINE1/PAI1 and BHLHE40/DEC1. The polypeptide is Basic helix-loop-helix ARNT-like protein 2 (Homo sapiens (Human)).